We begin with the raw amino-acid sequence, 559 residues long: Actin-binding protein WASF1 (559 aa).

Disordered regions lie at residues 169–202 (TEDKRKEKRKQKQKNLDRPHEPEKVPRAPHDRRR), 307–400 (RPQS…SPPV), and 412–492 (VHPL…STLP). A compositionally biased stretch (basic and acidic residues) spans 182-202 (KNLDRPHEPEKVPRAPHDRRR). The segment covering 322 to 332 (PTPPPPPPPLP) has biased composition (pro residues). Positions 333 to 346 (SALSTSSLRASMTS) are enriched in low complexity. Arg341 carries the post-translational modification Asymmetric dimethylarginine; alternate. The residue at position 341 (Arg341) is an Omega-N-methylarginine; alternate. Composition is skewed to pro residues over residues 347-374 (TPPPPVPPPPPPPAPALQAPAVPPPPAP), 384-399 (PAPPPIAPPLVQPSPP), 423-437 (LPPPPPPPPLPPPGI), and 458-477 (TPSPAPGPHAPLMPPSPPSQ). A Phosphoserine modification is found at Ser489. Residues 497-514 (ARSVLLEAIRKGIQLRKV) enclose the WH2 domain.

It belongs to the SCAR/WAVE family. As to quaternary structure, component of the WAVE1 complex composed of ABI2, CYFIP1 or CYFIP2, BRK1, NCKAP1 and WASF1/WAVE1. Within the complex, a heterodimer containing NCKAP1 and CYFIP1 interacts with a heterotrimer formed by WAVE1, ABI2 and BRK1. CYFIP2 binds to activated RAC1 which causes the complex to dissociate, releasing activated WASF1. The complex can also be activated by NCK1. Binds actin and the Arp2/3 complex. Interacts with BAIAP2. Interacts with SHANK3; the interaction mediates the association of SHANK3 with the WAVE1 complex. Interacts with ABI1 (via N-terminus). Interacts with SORBS2; this interaction greatly enhances phosphorylation by ABL1 and dephosphorylation by PTPN12 and might mediate partial to focal adhesion sites. As to expression, expressed in hippocampal neurons (at protein level).

The protein localises to the cytoplasm. It localises to the cytoskeleton. The protein resides in the synapse. Its subcellular location is the cell junction. It is found in the focal adhesion. In terms of biological role, downstream effector molecule involved in the transmission of signals from tyrosine kinase receptors and small GTPases to the actin cytoskeleton. Promotes formation of actin filaments. Part of the WAVE complex that regulates lamellipodia formation. The WAVE complex regulates actin filament reorganization via its interaction with the Arp2/3 complex. As component of the WAVE1 complex, required for BDNF-NTRK2 endocytic trafficking and signaling from early endosomes. Also involved in the regulation of mitochondrial dynamics. The protein is Actin-binding protein WASF1 (Wasf1) of Rattus norvegicus (Rat).